Consider the following 404-residue polypeptide: MREAPHVLGIVLAGGEGKRLYPLTADRAKPAVPFGGGYRLIDFVLSNLVNARFLRICVLTQYKSHSLDRHISQNWRLSGLAGEYITPVPAQQRLGPRWYTGSADAIYQSMNLIYDEDPDYIVIFGADHVYRMDPEQMVQQHIESGAGATVAGIRVPRSEASAFGCIDADDSGRIRGWVEKPADPPGTPDDPEMTFASMGNYIFTTKVLIDAIRADAEDDDSDHDMGGDIIPRLVADGMASVYDFNNNEVPGATERDHGYWRDVGTLDAFYDAHMDLVSVHPIFNLYNKRWPIRGGAENLAPAKFVNGGSAQESVVGAGSIISAASVRNSVLSSNVAIDDGAIVEGSVIMPGVRIGRGAVVRHAILDKNVVVGPGEMVGVDLDKDRERFTVSAGGVVAVGKGVWI.

Residues Tyr99, Gly164, 179–180 (EK), and Ser197 each bind alpha-D-glucose 1-phosphate.

Belongs to the bacterial/plant glucose-1-phosphate adenylyltransferase family.

The catalysed reaction is alpha-D-glucose 1-phosphate + ATP + H(+) = ADP-alpha-D-glucose + diphosphate. The protein operates within glycan biosynthesis; glycogen biosynthesis. Its function is as follows. Involved in the biosynthesis of ADP-glucose, a building block, required in the biosynthesis of maltose-1-phosphate (M1P) and in the elongation reactions to produce linear alpha-1,4-glucans. Catalyzes the reaction between ATP and alpha-D-glucose 1-phosphate (G1P) to produce pyrophosphate and ADP-Glc. In Mycolicibacterium gilvum (strain PYR-GCK) (Mycobacterium gilvum (strain PYR-GCK)), this protein is Glucose-1-phosphate adenylyltransferase.